The sequence spans 239 residues: Derlin-2 (239 aa).

Topologically, residues 1 to 57 (MAYQSLRLEYLQIPPVSRAYTTACVLTTAAVQLELITPFQLYFNPELIFKHFQIWRL) are cytoplasmic. A helical membrane pass occupies residues 58–78 (ITNFLFFGPVGFNFLFNMIFL). Topologically, residues 79–96 (YRYCRMLEEGSFRGRTAD) are lumenal. A helical membrane pass occupies residues 97–117 (FVFMFLFGGFLMTLFGLFVSL). The Cytoplasmic segment spans residues 118-150 (VFLGQAFTIMLVYVWSRRNPYVRMNFFGLLNFQ). The helical transmembrane segment at 151 to 171 (APFLPWVLMGFSLLLGNSIIV) threads the bilayer. Aspartate 172 is a topological domain (lumenal). A helical transmembrane segment spans residues 173–193 (LLGIAVGHIYFFLEDIFPNQP). The Cytoplasmic segment spans residues 194 to 239 (GGIRILKTPSILRTIFDTPDEDPNYNPLPEERPGGFAWGEGQRLGG). The tract at residues 214–239 (EDPNYNPLPEERPGGFAWGEGQRLGG) is disordered. Residues 229-239 (FAWGEGQRLGG) show a composition bias toward gly residues.

It belongs to the derlin family. Forms homo- and heterooligomers with DERL3 and, to a lesser extent, with DERL1. Interacts with the SEL1L/SYVN1 and VCP/SELENOS protein complexes. Mediates association between VCP and EDEM1, as well as that between VCP and the misfolded glycoproteins. Interacts with OS9. Interacts with SELENOK and SELENOS. Interacts with the signal recognition particle/SRP and the SRP receptor; in the process of endoplasmic reticulum stress-induced pre-emptive quality control. Interacts with CCDC47. In terms of tissue distribution, widely expressed, with lowest levels in brain and heart.

Its subcellular location is the endoplasmic reticulum membrane. Its function is as follows. Functional component of endoplasmic reticulum-associated degradation (ERAD) for misfolded lumenal glycoproteins, but not that of misfolded nonglycoproteins. May act by forming a channel that allows the retrotranslocation of misfolded glycoproteins into the cytosol where they are ubiquitinated and degraded by the proteasome. May mediate the interaction between VCP and misfolded glycoproteins. May also be involved in endoplasmic reticulum stress-induced pre-emptive quality control, a mechanism that selectively attenuates the translocation of newly synthesized proteins into the endoplasmic reticulum and reroutes them to the cytosol for proteasomal degradation. The protein is Derlin-2 of Mus musculus (Mouse).